Consider the following 626-residue polypeptide: Nuclear receptor subfamily 4 group A member 3 (626 aa).

The tract at residues Met1–His108 is activation function (AF)-1 domain. Residues Met1–Ser138 form a required for DNA-PK heterotrimer region. The interaction with NCOA1, NCOA2, NCOA3 and KAT2B stretch occupies residues Met1 to Thr291. Disordered regions lie at residues Pro92–Ala152, His192–Leu211, and Pro265–Ser284. Residues Ser93–Gln110 are compositionally biased toward basic residues. 2 stretches are compositionally biased toward pro residues: residues Pro140–Pro149 and Pro195–Ser204. Positions Ser268–Ser284 are enriched in low complexity. Positions Glu289–Thr364 form a DNA-binding region, nuclear receptor. NR C4-type zinc fingers lie at residues Cys292–Cys312 and Cys328–Cys352. The segment at Thr364–Pro394 is disordered. A compositionally biased stretch (low complexity) spans Lys377–Ser387. The interval Lys379–Phe626 is interaction with KAT2B. In terms of domain architecture, NR LBD spans Pro394 to Thr623.

The protein belongs to the nuclear hormone receptor family. NR4 subfamily. In terms of assembly, interacts with SIX3 (via homeobox); differentially regulates the transcriptional activities of NR4A3. Interacts with the constituents of DNA-PK heterotrimer PRKDC, XRCC6 and XRCC5; phosphorylates and prevents NR4A3 ubiquitinylation and degradation. Interacts with NCOA2; potentiates the activity of the NR4A3. Interacts with NCOA1, NCOA3, MED1 and KAT2B. Interacts with EP300 and NCOA2; mediates the recruitment of MED1 in the coactivator complex. Interacts with NR3C1 (via nuclear receptor DNA-binding domain); the interactions represses transcription activity of NR4A3 on the POMC promoter Nur response element (NurRE). Interacts with TRIM28; the interactions potentiates NR4A3 activity on NurRE promoter. Binds DNA as a monomer and homodimer. Interacts with PARP1; activates PARP1 by improving acetylation of PARP1 and suppressing the interaction between PARP1 and SIRT1. In terms of processing, phosphorylated by PRKDC. Isoform alpha is highly expressed in skeletal muscle. Isoform beta is highly expressed in skeletal muscle and low expressed in fetal brain and placenta.

The protein localises to the nucleus. Transcriptional activator that binds to regulatory elements in promoter regions in a cell- and response element (target)-specific manner. Induces gene expression by binding as monomers to the NR4A1 response element (NBRE) 5'-AAAAGGTCA-3' site and as homodimers to the Nur response element (NurRE) site in the promoter of their regulated target genes. Plays a role in the regulation of proliferation, survival and differentiation of many different cell types and also in metabolism and inflammation. Mediates proliferation of vascular smooth muscle, myeloid progenitor cell and type B pancreatic cells; promotes mitogen-induced vascular smooth muscle cell proliferation through transactivation of SKP2 promoter by binding a NBRE site. Upon PDGF stimulation, stimulates vascular smooth muscle cell proliferation by regulating CCND1 and CCND2 expression. In islets, induces type B pancreatic cell proliferation through up-regulation of genes that activate cell cycle, as well as genes that cause degradation of the CDKN1A. Negatively regulates myeloid progenitor cell proliferation by repressing RUNX1 in a NBRE site-independent manner. During inner ear, plays a role as a key mediator of the proliferative growth phase of semicircular canal development. Also mediates survival of neuron and smooth muscle cells; mediates CREB-induced neuronal survival, and during hippocampus development, plays a critical role in pyramidal cell survival and axonal guidance. Is required for S phase entry of the cell cycle and survival of smooth muscle cells by inducing CCND1, resulting in RB1 phosphorylation. Binds to NBRE motif in CCND1 promoter, resulting in the activation of the promoter and CCND1 transcription. Also plays a role in inflammation; upon TNF stimulation, mediates monocyte adhesion by inducing the expression of VCAM1 and ICAM1 by binding to the NBRE consensus site. In mast cells activated by Fc-epsilon receptor cross-linking, promotes the synthesis and release of cytokines but impairs events leading to degranulation. Also plays a role in metabolism; by modulating feeding behavior; and by playing a role in energy balance by inhibiting the glucocorticoid-induced orexigenic neuropeptides AGRP expression, at least in part by forming a complex with activated NR3C1 on the AGRP- glucocorticoid response element (GRE), and thus weakening the DNA binding activity of NR3C1. Upon catecholamines stimulation, regulates gene expression that controls oxidative metabolism in skeletal muscle. Plays a role in glucose transport by regulating translocation of the SLC2A4 glucose transporter to the cell surface. Finally, during gastrulation plays a crucial role in the formation of anterior mesoderm by controlling cell migration. Inhibits adipogenesis. Also participates in cardiac hypertrophy by activating PARP1. The protein is Nuclear receptor subfamily 4 group A member 3 (NR4A3) of Homo sapiens (Human).